The chain runs to 1118 residues: Cytospin-A (1118 aa).

Disordered stretches follow at residues 1–63 (MKKA…AGMA), 75–176 (KKST…NQIS), 294–324 (SLSP…GSVE), and 359–391 (SSDD…NASE). The span at 80–90 (SSAAPSAPAPA) shows a compositional bias: low complexity. The span at 93–117 (ISENKSKISTGTSSSAKRSTSAGNK) shows a compositional bias: polar residues. A compositionally biased stretch (basic and acidic residues) spans 120–131 (SSTRERLRERTR). The span at 133–145 (NQSKKLPSVSQGA) shows a compositional bias: polar residues. The span at 158-171 (TAAEGDIRMSKSKS) shows a compositional bias: basic and acidic residues. A coiled-coil region spans residues 168 to 281 (KSKSDNQISD…LNALGFSLEQ (114 aa)). A compositionally biased stretch (polar residues) spans 294–304 (SLSPEITPGNQ). The segment covering 359–373 (SSDDALDAPSSSESE) has biased composition (low complexity). Ser-385, Ser-386, and Ser-390 each carry phosphoserine. Coiled-coil stretches lie at residues 395–450 (ACLT…MESL) and 488–808 (RYME…RGRV). 3 positions are modified to phosphoserine: Ser-869, Ser-882, and Ser-888. Residues 921–999 (TSSTSRPASL…STRSRIREER (79 aa)) are disordered. A compositionally biased stretch (basic and acidic residues) spans 947-957 (RSSEEMKRDIS). The segment covering 972-992 (TTSPQLSLSSSPTASVTPSTR) has biased composition (low complexity). Positions 1012–1117 (GSKRNALLKW…YVTAIYKYFE (106 aa)) constitute a Calponin-homology (CH) domain.

It belongs to the cytospin-A family. In terms of assembly, may interact with both microtubules and actin cytoskeleton.

Its subcellular location is the cytoplasm. It localises to the cytoskeleton. It is found in the spindle. The protein localises to the cell junction. The protein resides in the gap junction. Functionally, involved in cytokinesis and spindle organization. May play a role in actin cytoskeleton organization and microtubule stabilization and hence required for proper cell adhesion and migration. The protein is Cytospin-A (Specc1l) of Mus musculus (Mouse).